A 276-amino-acid polypeptide reads, in one-letter code: NAD kinase (276 aa).

Asp-66 functions as the Proton acceptor in the catalytic mechanism. NAD(+) is bound by residues 66 to 67, 139 to 140, Asp-168, 179 to 184, and Gln-234; these read DG, ND, and TAYNIS.

Belongs to the NAD kinase family. Requires a divalent metal cation as cofactor.

Its subcellular location is the cytoplasm. It carries out the reaction NAD(+) + ATP = ADP + NADP(+) + H(+). Involved in the regulation of the intracellular balance of NAD and NADP, and is a key enzyme in the biosynthesis of NADP. Catalyzes specifically the phosphorylation on 2'-hydroxyl of the adenosine moiety of NAD to yield NADP. The protein is NAD kinase of Campylobacter lari (strain RM2100 / D67 / ATCC BAA-1060).